The sequence spans 197 residues: Dermorphin-1 (197 aa).

A signal peptide spans 1 to 20 (MSFLKKSLLLILFLGLVSLS). The propeptide occupies 21–45 (VCKEEKRETEEENENEENHEEGSEM). The interval 24–197 (EEKRETEEEN…GYPSGEAKKM (174 aa)) is disordered. Acidic residues predominate over residues 30 to 39 (EEENENEENH). Positions 40–62 (EEGSEMKRYMFHLMDGEAKKRDS) are enriched in basic and acidic residues. Position 49 is a D-methionine (M49). Position 54 is an aspartic acid 1-amide (D54). A propeptide spanning residues 56–77 (EAKKRDSEENEIEENHEEGSEM) is cleaved from the precursor. A81 is subject to D-alanine (Ala). S86 is subject to Serine amide. Residues 88 to 97 (EAKKIKRVSE) show a composition bias toward basic and acidic residues. Residues 88 to 112 (EAKKIKRVSEEENENEENHEEGSEM) constitute a propeptide that is removed on maturation. The residue at position 116 (A116) is a D-alanine (Ala). S121 is subject to Serine amide. Residues 123–132 (EAKKIKRESE) show a composition bias toward basic and acidic residues. The propeptide occupies 123 to 147 (EAKKIKRESEEEKEIEENHEEGSEM). D-alanine (Ala) is present on A151. Residue S156 is modified to Serine amide. A propeptide spanning residues 158 to 182 (EAKKIKRESEEENENEENHEEGSEM) is cleaved from the precursor. The segment covering 167–176 (EEENENEENH) has biased composition (acidic residues). Position 186 is a D-alanine (Ala) (A186). Serine amide is present on S191. Positions 193 to 197 (EAKKM) are excised as a propeptide.

Belongs to the frog skin active peptide (FSAP) family. Dermorphin subfamily. Expressed by the skin glands.

Its subcellular location is the secreted. Functionally, dermorphin has a very potent opiate-like activity. It has high affinity and selectivity for mu-type opioid receptors. In terms of biological role, deltorphin has a very potent opiate-like activity. It has high affinity and selectivity for delta-type opioid receptors. This chain is Dermorphin-1, found in Phyllomedusa sauvagei (Sauvage's leaf frog).